Reading from the N-terminus, the 379-residue chain is Cytochrome b (379 aa).

4 consecutive transmembrane segments (helical) span residues 34–54 (YGSL…MLAM), 78–100 (WMIR…VHIG), 113–133 (TWNI…LGYV), and 179–199 (FFSL…IHLL). 2 residues coordinate heme b: His-84 and His-98. Heme b-binding residues include His-183 and His-197. An a ubiquinone-binding site is contributed by His-202. 4 helical membrane passes run 225–245 (FSIK…FLVL), 289–309 (LGGV…PIFS), 320–340 (WSGM…WIGA), and 345–365 (APYI…FFWM).

The protein belongs to the cytochrome b family. In terms of assembly, the main subunits of complex b-c1 are: cytochrome b, cytochrome c1 and the Rieske protein. Heme b is required as a cofactor.

Its subcellular location is the mitochondrion inner membrane. Functionally, component of the ubiquinol-cytochrome c reductase complex (complex III or cytochrome b-c1 complex) that is part of the mitochondrial respiratory chain. The b-c1 complex mediates electron transfer from ubiquinol to cytochrome c. Contributes to the generation of a proton gradient across the mitochondrial membrane that is then used for ATP synthesis. This chain is Cytochrome b (mt:Cyt-b), found in Epiperipatus biolleyi (Velvet worm).